A 414-amino-acid polypeptide reads, in one-letter code: Histidine--tRNA ligase (414 aa).

The protein belongs to the class-II aminoacyl-tRNA synthetase family. Homodimer.

It localises to the cytoplasm. The catalysed reaction is tRNA(His) + L-histidine + ATP = L-histidyl-tRNA(His) + AMP + diphosphate + H(+). The protein is Histidine--tRNA ligase of Pelobacter propionicus (strain DSM 2379 / NBRC 103807 / OttBd1).